The chain runs to 118 residues: Basic phospholipase A2 PA-12C (118 aa).

7 cysteine pairs are disulfide-bonded: Cys11–Cys71, Cys27–Cys117, Cys29–Cys45, Cys44–Cys98, Cys51–Cys91, Cys60–Cys84, and Cys78–Cys89. The Ca(2+) site is built by Tyr28, Gly30, and Gly32. His48 is a catalytic residue. Asp49 contributes to the Ca(2+) binding site. Residue Asp92 is part of the active site.

This sequence belongs to the phospholipase A2 family. Group I subfamily. D49 sub-subfamily. The cofactor is Ca(2+). In terms of tissue distribution, expressed by the venom gland.

Its subcellular location is the secreted. The catalysed reaction is a 1,2-diacyl-sn-glycero-3-phosphocholine + H2O = a 1-acyl-sn-glycero-3-phosphocholine + a fatty acid + H(+). Functionally, PLA2 catalyzes the calcium-dependent hydrolysis of the 2-acyl groups in 3-sn-phosphoglycerides. The polypeptide is Basic phospholipase A2 PA-12C (Pseudechis australis (Mulga snake)).